The chain runs to 603 residues: Coagulation factor XII (603 aa).

A signal peptide spans 1–18 (GRLLLGSLLVSLESALSA). The 49-residue stretch at 41–89 (VTGEPCYFPFQYNRQLYHHCIHKGRPGPRPWCATTPNFDQDQQWAYCLE) folds into the Fibronectin type-II domain. Intrachain disulfides connect C46/C72, C60/C87, C97/C109, C103/C118, C120/C129, C134/C162, C160/C169, C177/C188, C182/C197, C199/C208, C216/C294, C237/C276, C265/C289, C345/C472, C383/C399, C391/C461, C422/C425, C488/C557, C520/C536, and C547/C578. Positions 93–130 (VKDHCSKHNPCQRGGICVNTLSSPHCLCPDHLTGKHCQ) constitute an EGF-like 1 domain. In terms of domain architecture, Fibronectin type-I spans 132-172 (EKCFEPQLHRFFHENEIWFRTGPAGVAKCHCKGPDAHCKQM). In terms of domain architecture, EGF-like 2 spans 173 to 209 (HSQECQTNPCLNGGRCLEVEGHHLCDCPMGYTGPFCD). In terms of domain architecture, Kringle spans 216-294 (CYEGRGVSYR…SWEYCDLAQC (79 aa)). 2 N-linked (GlcNAc...) asparagine glycosylation sites follow: N248 and N270. Residues 359-602 (IVGGLVALPG…YLTWIQKHTA (244 aa)) form the Peptidase S1 domain. H398 acts as the Charge relay system in catalysis. N-linked (GlcNAc...) asparagine glycosylation occurs at N419. D447 acts as the Charge relay system in catalysis. S551 functions as the Charge relay system in the catalytic mechanism.

This sequence belongs to the peptidase S1 family. As to quaternary structure, interacts with HRG; the interaction, which is enhanced in the presence of zinc ions and inhibited by heparin-binding, inhibits factor XII autoactivation and contact-initiated coagulation. In terms of processing, O- and N-glycosylated.

It localises to the secreted. The catalysed reaction is Selective cleavage of Arg-|-Ile bonds in factor VII to form factor VIIa and factor XI to form factor XIa.. Its activity is regulated as follows. Activity is promoted in the presence of negatively charged surfaces. Factor XII is a serum glycoprotein that participates in the initiation of blood coagulation, fibrinolysis, and the generation of bradykinin and angiotensin. Prekallikrein is cleaved by factor XII to form kallikrein, which then cleaves factor XII first to alpha-factor XIIa and then trypsin cleaves it to beta-factor XIIa. Alpha-factor XIIa activates factor XI to factor XIa. In Cavia porcellus (Guinea pig), this protein is Coagulation factor XII (F12).